The chain runs to 33 residues: Brevinin-2DYa (33 aa).

An intrachain disulfide couples cysteine 27 to cysteine 33.

Expressed by the skin glands.

The protein resides in the secreted. Antimicrobial peptide. The protein is Brevinin-2DYa of Rana dybowskii (Dybovsky's frog).